The sequence spans 37 residues: Large ribosomal subunit protein bL36 (37 aa).

The protein belongs to the bacterial ribosomal protein bL36 family.

The protein is Large ribosomal subunit protein bL36 of Acidithiobacillus ferrooxidans (strain ATCC 23270 / DSM 14882 / CIP 104768 / NCIMB 8455) (Ferrobacillus ferrooxidans (strain ATCC 23270)).